Reading from the N-terminus, the 474-residue chain is Protein U79/U80 (474 aa).

Basic and acidic residues-rich tracts occupy residues 156 to 165 (DRKKHDDEHR) and 175 to 219 (RKVE…KRQK). Disordered regions lie at residues 156 to 219 (DRKK…KRQK) and 412 to 441 (SGQNRGRARGRGRGRAPRRRNSNINNSRTQ). Over residues 417–432 (GRARGRGRGRAPRRRN) the composition is skewed to basic residues.

Belongs to the herpesviridae U79/UL112 family.

It localises to the host nucleus. May be involved in DNA replication. This chain is Protein U79/U80 (U79/U80), found in Homo sapiens (Human).